An 887-amino-acid polypeptide reads, in one-letter code: GPMGIMGPRGPPGASGAPGPQGFQGPPGEPGEPGQTGPAGARGPPGPPGKAGEDGHPGKPGRSGERGVVGPQGARGFPGTPGIPGFKGIRGHNGIDGIKGQPGAPGVKGEPGAPGARGIPGERGRVGAPGPAGARGSDGSVGPVGPAGPIGSAGPPGFPGAPGPKGEIGPVGSPGASGPAGPRGEVGIPGVSGPVGPPGNGAAGIPGVAGAPGIPGPRGIPGPVGAAGATGARGIVGEPGPAGSKAGPQGIPGPSGEEGKRGSTGEIGPAGPPGPPGIRGSPGSRGIPGADGRAGVMGIPGSRGATGPAGVRGFPGSPGNIGPAGKEGPVGIPGIDGRPGPTGPAGARNIGFPGPKGPTGDNGDKGHAGIAGARGAPGPDGNNGAQGPPQGGKGEQGPAGPPGFQGIPGPAGTAGEAGKPGERGIPGEFGIPGPAGPRGERGPPGESGAAGPTGPIGNRGPSGPAGPDGNKGEPGVVGAPGTAGPSGPSGIPGERGAAGIPGPKGEKGEPGIRRDGARGAPGAVGAPGPAGANGDRGEAGPAGPAGPAGPRGSPGERGEVGPAGPNGFAGPAGAAGQPGAKGERGTRGDGGPPGATGFPGAAGRTGPPGPSGISGPPGPPGPAGKEGIRGPRGDQGPVGRSGETGASGPPGFAGEKTPGPQGIIGAPGFIGIPGSRGERGIPGVAGSVGEPGPIGIAGPPGARGPPGAVGNPGVNGAPGEAGRDGNPGSDGPPGRGHKGERGYPGAGAPGPQGPVGPTGKHGNRGEPGPAGVVGPTGAVGPRGPSGPQGIRGDKGEPGDKGPRGIPGIKGHNGIQGIPGIAGHHGDQGAPGSVGPAGPRGPAGPSGPVGKDGRTGHPGAVGPAGIRGSQGPAGPPGPPGPPGPPGPS.

Positions 1–42 (GPMGIMGPRGPPGASGAPGPQGFQGPPGEPGEPGQTGPAGAR) are enriched in low complexity. Positions 1–887 (GPMGIMGPRG…PGPPGPPGPS (887 aa)) are disordered. Over residues 51 to 65 (AGEDGHPGKPGRSGE) the composition is skewed to basic and acidic residues. 7 stretches are compositionally biased toward low complexity: residues 126 to 155 (VGAPGPAGARGSDGSVGPVGPAGPIGSAGP), 170 to 194 (PVGSPGASGPAGPRGEVGIPGVSGP), 221 to 236 (PGPVGAAGATGARGIV), 278 to 290 (IRGSPGSRGIPGA), 368 to 388 (AGIAGARGAPGPDGNNGAQGP), 444 to 455 (PGESGAAGPTGP), and 473 to 503 (EPGVVGAPGTAGPSGPSGIPGERGAAGIPGP). Residues 504-517 (KGEKGEPGIRRDGA) show a composition bias toward basic and acidic residues. 6 stretches are compositionally biased toward low complexity: residues 518–533 (RGAPGAVGAPGPAGAN), 560–580 (VGPAGPNGFAGPAGAAGQPGA), 595–605 (ATGFPGAAGRT), 658–673 (PGPQGIIGAPGFIGIP), 690–720 (EPGPIGIAGPPGARGPPGAVGNPGVNGAPGE), and 766–782 (EPGPAGVVGPTGAVGPR). The segment covering 791–802 (RGDKGEPGDKGP) has biased composition (basic and acidic residues). Pro residues predominate over residues 872-887 (AGPPGPPGPPGPPGPS).

This sequence belongs to the fibrillar collagen family. Trimers of one alpha 2(I) and two alpha 1(I) chains. Interacts (via C-terminus) with TMEM131 (via PapD-L domain); the interaction is direct and is involved in assembly and TRAPPIII ER-to-Golgi transport complex-dependent secretion of collagen. Post-translationally, prolines at the third position of the tripeptide repeating unit (G-X-Y) are hydroxylated in some or all of the chains. As to expression, forms the fibrils of tendon, ligaments and bones. In bones, the fibrils are mineralized with calcium hydroxyapatite.

It localises to the secreted. The protein resides in the extracellular space. Its subcellular location is the extracellular matrix. In terms of biological role, type I collagen is a member of group I collagen (fibrillar forming collagen). This is Collagen alpha-2(I) chain from Hippopotamus amphibius (Hippopotamus).